Consider the following 303-residue polypeptide: Leukocyte immunoglobulin-like receptor subfamily B member 4B (303 aa).

Residues 1-23 form the signal peptide; the sequence is MIAMLTVLLYLALILEPRTAVQA. The Extracellular segment spans residues 24–238; the sequence is GHLPKPIIWA…TEDGLETYQK (215 aa). Ig-like C2-type domains lie at 42–123 and 124–212; these read YTSV…AYEN and PSLS…KPSN. Cys-49 and Cys-98 are joined by a disulfide. N-linked (GlcNAc...) asparagine glycans are attached at residues Asn-79, Asn-133, and Asn-191. Cys-144 and Cys-196 are joined by a disulfide. The chain crosses the membrane as a helical span at residues 239-260; the sequence is ILIGVLVSFLLLFFLLLFLILI. At 261–303 the chain is on the cytoplasmic side; it reads GYQCRHKNKANASVKNTQSEDNAELNSWNPQNEDPPRELCTPR. The segment covering 275-292 has biased composition (polar residues); that stretch reads KNTQSEDNAELNSWNPQN. The segment at 275–303 is disordered; sequence KNTQSEDNAELNSWNPQNEDPPRELCTPR.

In terms of assembly, monomer and homodimer. Expressed on mast cells (at protein level). Also expressed at much lower levels on natural killer cells (at protein level).

The protein resides in the cell membrane. Plays a role in mast cell activation. In Mus musculus (Mouse), this protein is Leukocyte immunoglobulin-like receptor subfamily B member 4B.